Consider the following 228-residue polypeptide: DNA mismatch repair protein MutH (228 aa).

It belongs to the MutH family.

It is found in the cytoplasm. In terms of biological role, sequence-specific endonuclease that cleaves unmethylated GATC sequences. It is involved in DNA mismatch repair. The chain is DNA mismatch repair protein MutH from Yersinia pseudotuberculosis serotype O:1b (strain IP 31758).